Consider the following 455-residue polypeptide: Kynurenine 3-monooxygenase (455 aa).

Belongs to the aromatic-ring hydroxylase family. KMO subfamily. FAD is required as a cofactor.

It carries out the reaction L-kynurenine + NADPH + O2 + H(+) = 3-hydroxy-L-kynurenine + NADP(+) + H2O. The protein operates within cofactor biosynthesis; NAD(+) biosynthesis; quinolinate from L-kynurenine: step 1/3. In terms of biological role, catalyzes the hydroxylation of L-kynurenine (L-Kyn) to form 3-hydroxy-L-kynurenine (L-3OHKyn). Required for synthesis of quinolinic acid. The polypeptide is Kynurenine 3-monooxygenase (Xanthomonas euvesicatoria pv. vesicatoria (strain 85-10) (Xanthomonas campestris pv. vesicatoria)).